Here is a 452-residue protein sequence, read N- to C-terminus: Retinoid-inducible serine carboxypeptidase (452 aa).

An N-terminal signal peptide occupies residues 1-28; the sequence is MELSRRICLVRLWLLLLSFLLGFSAGSA. Asn64, Asn102, and Asn126 each carry an N-linked (GlcNAc...) asparagine glycan. The active site involves Ser167. Residues Asn192 and Asn362 are each glycosylated (N-linked (GlcNAc...) asparagine). Active-site residues include Asp371 and His431.

This sequence belongs to the peptidase S10 family.

It localises to the secreted. Its function is as follows. May be involved in vascular wall and kidney homeostasis. The polypeptide is Retinoid-inducible serine carboxypeptidase (Scpep1) (Mus musculus (Mouse)).